The primary structure comprises 312 residues: MNGMNHSVVSEFVFMGLTNSREIQLLLFVFSLLFYFASMMGNLVIVFTVTMDAHLHSPMYFLLANLSIIDMAFCSITAPKMICDIFKKHKAISFRGCITQIFFSHALGGTEMVLLIAMAFDRYMAICKPLHYLTIMSPRMCLYFLATSSIIGLIHSLVQLVFVVDLPFCGPNIFDSFYCDLPRLLRLACTNTQELEFMVTVNSGLISVGSFVLLVISYIFILFTVWKHSSGGLAKALSTLSAHVTVVILFFGPLMFFYTWPSPTSHLDKYLAIFDAFITPFLNPVIYTFRNKDMKVAMRRLCSRLAHFTKIL.

Residues 1-25 (MNGMNHSVVSEFVFMGLTNSREIQL) are Extracellular-facing. Residue Asn5 is glycosylated (N-linked (GlcNAc...) asparagine). A helical transmembrane segment spans residues 26 to 49 (LLFVFSLLFYFASMMGNLVIVFTV). The Cytoplasmic segment spans residues 50-57 (TMDAHLHS). Residues 58–79 (PMYFLLANLSIIDMAFCSITAP) form a helical membrane-spanning segment. The Extracellular portion of the chain corresponds to 80 to 100 (KMICDIFKKHKAISFRGCITQ). A disulfide bridge links Cys97 with Cys189. Residues 101–120 (IFFSHALGGTEMVLLIAMAF) form a helical membrane-spanning segment. At 121-139 (DRYMAICKPLHYLTIMSPR) the chain is on the cytoplasmic side. The helical transmembrane segment at 140–158 (MCLYFLATSSIIGLIHSLV) threads the bilayer. At 159–195 (QLVFVVDLPFCGPNIFDSFYCDLPRLLRLACTNTQEL) the chain is on the extracellular side. A helical transmembrane segment spans residues 196–219 (EFMVTVNSGLISVGSFVLLVISYI). The Cytoplasmic portion of the chain corresponds to 220-235 (FILFTVWKHSSGGLAK). A helical transmembrane segment spans residues 236–258 (ALSTLSAHVTVVILFFGPLMFFY). Topologically, residues 259–269 (TWPSPTSHLDK) are extracellular. The helical transmembrane segment at 270–289 (YLAIFDAFITPFLNPVIYTF) threads the bilayer. The Cytoplasmic segment spans residues 290–312 (RNKDMKVAMRRLCSRLAHFTKIL).

It belongs to the G-protein coupled receptor 1 family.

It localises to the cell membrane. Its function is as follows. Odorant receptor. This is Olfactory receptor 4F15 (OR4F15) from Homo sapiens (Human).